The following is a 713-amino-acid chain: Cyclomaltodextrin glucanotransferase (713 aa).

The first 27 residues, 1-27 (MKKFLKSTAALALGLSLTFGLFSPAQA), serve as a signal peptide directing secretion. An A1 region spans residues 28–165 (APDTSVSNKQ…NIKVIIDFAP (138 aa)). Ca(2+)-binding residues include Asp54, Asn56, Asn59, and Asn60. An intrachain disulfide couples Cys70 to Cys77. Residues Gly78 and Asp80 each coordinate Ca(2+). 127–128 (YW) contributes to the substrate binding site. Asn166 contributes to the Ca(2+) binding site. Residues 166 to 229 (NHTSPASSDQ…NLYDLADLNH (64 aa)) are b. Substrate is bound by residues His167 and 172 to 174 (SSD). Ile217 is a binding site for Ca(2+). 220-223 (NLYD) contributes to the substrate binding site. Residue Asp226 participates in Ca(2+) binding. The tract at residues 230–433 (NNSTVDVYLK…LRKCNPAIAY (204 aa)) is A2. Residue Arg254 participates in substrate binding. Residue Asp256 is the Nucleophile of the active site. Position 259 to 260 (259 to 260 (KH)) interacts with substrate. His260 lines the Ca(2+) pocket. Glu284 (proton donor) is an active-site residue. Residue Ala342 coordinates Ca(2+). Residues His354, Asp398, and Arg402 each contribute to the substrate site. The segment at 434–522 (GSTQERWINN…GTAVWQYTAA (89 aa)) is c. A d region spans residues 523–609 (TATPTIGHVG…SNVYDNFEVL (87 aa)). Positions 526–607 (PTIGHVGPMM…TASNVYDNFE (82 aa)) constitute an IPT/TIG domain. A Ca(2+)-binding site is contributed by Asp604. In terms of domain architecture, CBM20 spans 608 to 713 (VLSGDQVSVR…TATINVNWQP (106 aa)). Residues 610–713 (SGDQVSVRFV…TATINVNWQP (104 aa)) form an e region.

Belongs to the glycosyl hydrolase 13 family. As to quaternary structure, monomer. The cofactor is Ca(2+).

Its subcellular location is the secreted. The catalysed reaction is Cyclizes part of a (1-&gt;4)-alpha-D-glucan chain by formation of a (1-&gt;4)-alpha-D-glucosidic bond.. The polypeptide is Cyclomaltodextrin glucanotransferase (cgt) (Niallia circulans (Bacillus circulans)).